Consider the following 354-residue polypeptide: Uroporphyrinogen decarboxylase (354 aa).

Residues 27-31, D77, Y153, T208, and H326 contribute to the substrate site; that span reads RQAGR.

This sequence belongs to the uroporphyrinogen decarboxylase family. Homodimer.

It is found in the cytoplasm. It carries out the reaction uroporphyrinogen III + 4 H(+) = coproporphyrinogen III + 4 CO2. It functions in the pathway porphyrin-containing compound metabolism; protoporphyrin-IX biosynthesis; coproporphyrinogen-III from 5-aminolevulinate: step 4/4. Catalyzes the decarboxylation of four acetate groups of uroporphyrinogen-III to yield coproporphyrinogen-III. In Neisseria meningitidis serogroup C / serotype 2a (strain ATCC 700532 / DSM 15464 / FAM18), this protein is Uroporphyrinogen decarboxylase.